The chain runs to 931 residues: Glycine dehydrogenase (decarboxylating) (931 aa).

An N6-(pyridoxal phosphate)lysine modification is found at lysine 684.

It belongs to the GcvP family. In terms of assembly, the glycine cleavage system is composed of four proteins: P, T, L and H. The cofactor is pyridoxal 5'-phosphate.

It catalyses the reaction N(6)-[(R)-lipoyl]-L-lysyl-[glycine-cleavage complex H protein] + glycine + H(+) = N(6)-[(R)-S(8)-aminomethyldihydrolipoyl]-L-lysyl-[glycine-cleavage complex H protein] + CO2. The glycine cleavage system catalyzes the degradation of glycine. The P protein binds the alpha-amino group of glycine through its pyridoxal phosphate cofactor; CO(2) is released and the remaining methylamine moiety is then transferred to the lipoamide cofactor of the H protein. In Bartonella henselae (strain ATCC 49882 / DSM 28221 / CCUG 30454 / Houston 1) (Rochalimaea henselae), this protein is Glycine dehydrogenase (decarboxylating).